A 146-amino-acid polypeptide reads, in one-letter code: uncharacterized protein (146 aa).

To E.coli YmfS.

This is an uncharacterized protein from Escherichia coli (strain K12).